Here is an 89-residue protein sequence, read N- to C-terminus: MKTLLLTLVVVTIMCLDLGYTLTCYKGRDRSSETCRSEQELCCTKTWCDQWCQDRGPRLEMGCTATCPRRMPGLDFTCCTTDNCNPVPT.

Positions 1-21 (MKTLLLTLVVVTIMCLDLGYT) are cleaved as a signal peptide. 5 disulfide bridges follow: cysteine 24–cysteine 42, cysteine 35–cysteine 63, cysteine 48–cysteine 52, cysteine 67–cysteine 78, and cysteine 79–cysteine 84.

Belongs to the three-finger toxin family. Long-chain subfamily. Type II alpha-neurotoxin sub-subfamily. In terms of tissue distribution, expressed by the venom gland.

The protein resides in the secreted. Its function is as follows. Binds with high affinity to muscular (alpha-1/CHRNA1) and neuronal (alpha-7/CHRNA7) nicotinic acetylcholine receptor (nAChR) and inhibits acetylcholine from binding to the receptor, thereby impairing neuromuscular and neuronal transmission. In Pseudechis australis (Mulga snake), this protein is Long neurotoxin homolog Pa ID.